A 1396-amino-acid polypeptide reads, in one-letter code: Probable ATP-dependent RNA helicase spindle-E (1396 aa).

The interval 1–34 (MDEAAGPSTSRTSNLEDVDDEGASLAEEDEEHTK) is disordered. A compositionally biased stretch (acidic residues) spans 16 to 30 (EDVDDEGASLAEEDE). A Helicase ATP-binding domain is found at 68–234 (LDKIRSNAVV…FKIPKKSGYL (167 aa)). 81–88 (GATGCGKT) is a binding site for ATP. Positions 180 to 183 (DEVH) match the DEAH box motif. Residues 292–468 (KGQEFGDSLE…TVVLKAKLLE (177 aa)) enclose the Helicase C-terminal domain. The region spanning 885–950 (NFAMGQMVAA…RQLDDSLGQL (66 aa)) is the Tudor domain.

This sequence belongs to the DEAD box helicase family. DEAH subfamily.

Its subcellular location is the cytoplasm. The catalysed reaction is ATP + H2O = ADP + phosphate + H(+). Its function is as follows. Probable ATP-binding RNA helicase which plays a central role during gametogenesis by repressing transposable elements and preventing their mobilization, which is essential for the germline integrity. Acts via the piRNA metabolic process, which mediates the repression of transposable elements during meiosis by forming complexes composed of piRNAs and Piwi proteins and govern the methylation and subsequent repression of transposons. This is Probable ATP-dependent RNA helicase spindle-E (spn-E) from Culex quinquefasciatus (Southern house mosquito).